A 435-amino-acid chain; its full sequence is S-phase entry cyclin-5 (435 aa).

2 disordered regions span residues 36–70 and 104–126; these read KRAL…NPLS and NDRT…DAAS. The segment covering 41–52 has biased composition (low complexity); that stretch reads KNDSSSKQQVQD. Over residues 110 to 124 the composition is skewed to acidic residues; sequence EQEEEEEEEGEDDDA.

The protein belongs to the cyclin family. Cyclin AB subfamily.

Its function is as follows. Required for efficient progression through S phase and possibly for the normal progression through meiosis. Interacts with CDC28. In Saccharomyces cerevisiae (strain ATCC 204508 / S288c) (Baker's yeast), this protein is S-phase entry cyclin-5 (CLB5).